The sequence spans 269 residues: Ribosomal RNA small subunit methyltransferase A (269 aa).

S-adenosyl-L-methionine is bound by residues N18, L20, G45, E66, D91, and N112.

It belongs to the class I-like SAM-binding methyltransferase superfamily. rRNA adenine N(6)-methyltransferase family. RsmA subfamily.

Its subcellular location is the cytoplasm. The enzyme catalyses adenosine(1518)/adenosine(1519) in 16S rRNA + 4 S-adenosyl-L-methionine = N(6)-dimethyladenosine(1518)/N(6)-dimethyladenosine(1519) in 16S rRNA + 4 S-adenosyl-L-homocysteine + 4 H(+). Functionally, specifically dimethylates two adjacent adenosines (A1518 and A1519) in the loop of a conserved hairpin near the 3'-end of 16S rRNA in the 30S particle. May play a critical role in biogenesis of 30S subunits. This Shewanella loihica (strain ATCC BAA-1088 / PV-4) protein is Ribosomal RNA small subunit methyltransferase A.